We begin with the raw amino-acid sequence, 152 residues long: Biogenesis of lysosome-related organelles complex 1 subunit 1 (152 aa).

Belongs to the BLOC1S1 family. Component of the biogenesis of lysosome-related organelles complex-1 (BLOC-1). Interacts with BLOS2 and SNX1. Expressed in the whole plant (at protein level).

Its subcellular location is the cytoplasm. The protein localises to the endosome. Its function is as follows. Component of the biogenesis of lysosome-related organelles complex-1 (BLOC-1), a complex that mediates the vacuolar degradative transport via the intracellular vesicle trafficking from the endosome to the vacuole. Probably regulates the PIN1 and PIN2 homeostasis through its interaction with SNX1. The protein is Biogenesis of lysosome-related organelles complex 1 subunit 1 (BLOS1) of Arabidopsis thaliana (Mouse-ear cress).